Consider the following 322-residue polypeptide: Hapalindole dimethylallyltransferase (322 aa).

Positions 46, 60, 115, 166, 168, 221, 225, and 275 each coordinate dimethylallyl diphosphate.

Belongs to the aromatic prenyltransferase family.

It carries out the reaction hapalindole G + dimethylallyl diphosphate = ambiguine A + diphosphate. The enzyme catalyses hapalindole U + dimethylallyl diphosphate + H(+) = ambiguine H + diphosphate. Activity is slightly increased in the presence of Mg(2+). Prenyltransferase involved in the biosynthesis of ambiguines, a family of hapalindole-type alkaloids. Catalyzes the reverse prenylation of hapalindole G or U at the C2 position with dimethylallyl diphosphate (DMAPP) to generate ambiguine A or H, respectively. In addition, accepts hapalindole A, an epimer of hapalindole G, and catalyzes normal prenylation at its C2 position. This chain is Hapalindole dimethylallyltransferase, found in Fischerella ambigua (strain UTEX 1903).